The following is a 565-amino-acid chain: Granule-bound starch synthase 1b, chloroplastic/amyloplastic (565 aa).

A chloroplast-targeting transit peptide spans 1-34 (VFLSMRNKTQLAKRRATNYETHRNSSRTSSPIVC). ADP-alpha-D-glucose is bound at residue K52.

The protein belongs to the glycosyltransferase 1 family. Bacterial/plant glycogen synthase subfamily.

It localises to the plastid. The protein resides in the chloroplast. It is found in the amyloplast. It catalyses the reaction an NDP-alpha-D-glucose + [(1-&gt;4)-alpha-D-glucosyl](n) = [(1-&gt;4)-alpha-D-glucosyl](n+1) + a ribonucleoside 5'-diphosphate + H(+). The protein operates within glycan biosynthesis; starch biosynthesis. Involved in the synthesis of amylose in endosperm. The protein is Granule-bound starch synthase 1b, chloroplastic/amyloplastic of Hordeum vulgare (Barley).